The chain runs to 482 residues: MTTNTSTSSTTDDLTTGAPNGTGAPDGANGVGGPTGTVGGPGEHPAYEAGFTESANGRVYTVTGSDWEQILGVGEEENERIVVNMGPQHPSTHGVLRLVLEIEGETVTETRLVIGYLHTGIEKSCEYRTWTQAVTFLTRADYLSPLFNEAAYCLSVERLLGITEQVPERATVIRVMVMELQRIASHLVWLATGGMELGATTAMIFGFREREKVLDLLELITGLRMNHAYIRPGGLAQDLPDGAERAIRAFLADMPKRIREYHALLTGQPVWKARMVDVNVLDAAGCIALGTTGPVLRAAGLPWDLRKTMPYCGYETYEFDVPTALEGDSFARYLVRLEEMGESLKIVDQCLDRLRPGPVMVADKKIAWPSQLSVGSDGTGNSLAYIRKIMGTSMEALIHHFKLVTEGFRVPAGQVYTQIESPRGELGYHVVSDGGTRPFRVHVRDPSFVNLQAVPALTEGGQVADVIVGVASVDPVLGGVDR.

Over residues 1–16 (MTTNTSTSSTTDDLTT) the composition is skewed to low complexity. Residues 1–48 (MTTNTSTSSTTDDLTTGAPNGTGAPDGANGVGGPTGTVGGPGEHPAYE) are disordered. A compositionally biased stretch (gly residues) spans 29 to 42 (NGVGGPTGTVGGPG).

This sequence belongs to the complex I 49 kDa subunit family. As to quaternary structure, NDH-1 is composed of 14 different subunits. Subunits NuoB, C, D, E, F, and G constitute the peripheral sector of the complex.

The protein resides in the cell membrane. It catalyses the reaction a quinone + NADH + 5 H(+)(in) = a quinol + NAD(+) + 4 H(+)(out). In terms of biological role, NDH-1 shuttles electrons from NADH, via FMN and iron-sulfur (Fe-S) centers, to quinones in the respiratory chain. The immediate electron acceptor for the enzyme in this species is believed to be a menaquinone. Couples the redox reaction to proton translocation (for every two electrons transferred, four hydrogen ions are translocated across the cytoplasmic membrane), and thus conserves the redox energy in a proton gradient. This is NADH-quinone oxidoreductase subunit D from Frankia casuarinae (strain DSM 45818 / CECT 9043 / HFP020203 / CcI3).